The sequence spans 477 residues: Ribulose bisphosphate carboxylase large chain (477 aa).

Positions 1–2 are excised as a propeptide; the sequence is MS. Position 3 is an N-acetylproline (Pro-3). Lys-14 is subject to N6,N6,N6-trimethyllysine. Asn-123 and Thr-173 together coordinate substrate. Lys-175 serves as the catalytic Proton acceptor. Residue Lys-177 participates in substrate binding. Positions 201, 203, and 204 each coordinate Mg(2+). Position 201 is an N6-carboxylysine (Lys-201). The active-site Proton acceptor is His-294. Substrate is bound by residues Arg-295, His-327, and Ser-379.

It belongs to the RuBisCO large chain family. Type I subfamily. Heterohexadecamer of 8 large chains and 8 small chains; disulfide-linked. The disulfide link is formed within the large subunit homodimers. It depends on Mg(2+) as a cofactor. The disulfide bond which can form in the large chain dimeric partners within the hexadecamer appears to be associated with oxidative stress and protein turnover.

The protein localises to the plastid. It localises to the chloroplast. It carries out the reaction 2 (2R)-3-phosphoglycerate + 2 H(+) = D-ribulose 1,5-bisphosphate + CO2 + H2O. It catalyses the reaction D-ribulose 1,5-bisphosphate + O2 = 2-phosphoglycolate + (2R)-3-phosphoglycerate + 2 H(+). Functionally, ruBisCO catalyzes two reactions: the carboxylation of D-ribulose 1,5-bisphosphate, the primary event in carbon dioxide fixation, as well as the oxidative fragmentation of the pentose substrate in the photorespiration process. Both reactions occur simultaneously and in competition at the same active site. The chain is Ribulose bisphosphate carboxylase large chain from Manihot esculenta (Cassava).